We begin with the raw amino-acid sequence, 89 residues long: Large ribosomal subunit protein bL31B (89 aa).

This sequence belongs to the bacterial ribosomal protein bL31 family. Type B subfamily. As to quaternary structure, part of the 50S ribosomal subunit.

In Corynebacterium aurimucosum (strain ATCC 700975 / DSM 44827 / CIP 107346 / CN-1) (Corynebacterium nigricans), this protein is Large ribosomal subunit protein bL31B.